The primary structure comprises 180 residues: Small ribosomal subunit protein bS21c (180 aa).

A chloroplast-targeting transit peptide spans 1 to 79; the sequence is MASTSSLLNF…PSLAFSNTLY (79 aa). The segment covering 14 to 45 has biased composition (low complexity); that stretch reads LFPSNTSLPPSSNPKFPNPNSLSSQQNSISIS. Disordered stretches follow at residues 14 to 49 and 124 to 180; these read LFPS…SKKH and NKQE…GAPF. Residues 130-147 show a composition bias toward basic residues; the sequence is KRKHREAAKRNSRRRRGP. The segment covering 154–166 has biased composition (basic and acidic residues); the sequence is GKEEATKVDKKED.

Component of the chloroplast small ribosomal subunit (SSU). Mature 70S chloroplast ribosomes of higher plants consist of a small (30S) and a large (50S) subunit. The 30S small subunit contains 1 molecule of ribosomal RNA (16S rRNA) and 24 different proteins. The 50S large subunit contains 3 rRNA molecules (23S, 5S and 4.5S rRNA) and 33 different proteins. bS21c binds directly to 16S ribosomal RNA.

It is found in the plastid. It localises to the chloroplast. In terms of biological role, component of the chloroplast ribosome (chloro-ribosome), a dedicated translation machinery responsible for the synthesis of chloroplast genome-encoded proteins, including proteins of the transcription and translation machinery and components of the photosynthetic apparatus. This chain is Small ribosomal subunit protein bS21c (rps21), found in Spinacia oleracea (Spinach).